The primary structure comprises 257 residues: Thiazole synthase (257 aa).

The active-site Schiff-base intermediate with DXP is the lysine 96. Residues glycine 157, 184–185 (AG), and 206–207 (NT) contribute to the 1-deoxy-D-xylulose 5-phosphate site.

It belongs to the ThiG family. Homotetramer. Forms heterodimers with either ThiH or ThiS.

The protein localises to the cytoplasm. The enzyme catalyses [ThiS sulfur-carrier protein]-C-terminal-Gly-aminoethanethioate + 2-iminoacetate + 1-deoxy-D-xylulose 5-phosphate = [ThiS sulfur-carrier protein]-C-terminal Gly-Gly + 2-[(2R,5Z)-2-carboxy-4-methylthiazol-5(2H)-ylidene]ethyl phosphate + 2 H2O + H(+). The protein operates within cofactor biosynthesis; thiamine diphosphate biosynthesis. In terms of biological role, catalyzes the rearrangement of 1-deoxy-D-xylulose 5-phosphate (DXP) to produce the thiazole phosphate moiety of thiamine. Sulfur is provided by the thiocarboxylate moiety of the carrier protein ThiS. In vitro, sulfur can be provided by H(2)S. The protein is Thiazole synthase of Bartonella henselae (strain ATCC 49882 / DSM 28221 / CCUG 30454 / Houston 1) (Rochalimaea henselae).